The following is a 186-amino-acid chain: ATP synthase subunit delta (186 aa).

The protein belongs to the ATPase delta chain family. As to quaternary structure, F-type ATPases have 2 components, F(1) - the catalytic core - and F(0) - the membrane proton channel. F(1) has five subunits: alpha(3), beta(3), gamma(1), delta(1), epsilon(1). CF(0) has four main subunits: a(1), b(1), b'(1) and c(10-14). The alpha and beta chains form an alternating ring which encloses part of the gamma chain. F(1) is attached to F(0) by a central stalk formed by the gamma and epsilon chains, while a peripheral stalk is formed by the delta, b and b' chains.

It localises to the cell inner membrane. Its function is as follows. F(1)F(0) ATP synthase produces ATP from ADP in the presence of a proton or sodium gradient. F-type ATPases consist of two structural domains, F(1) containing the extramembraneous catalytic core and F(0) containing the membrane proton channel, linked together by a central stalk and a peripheral stalk. During catalysis, ATP synthesis in the catalytic domain of F(1) is coupled via a rotary mechanism of the central stalk subunits to proton translocation. This protein is part of the stalk that links CF(0) to CF(1). It either transmits conformational changes from CF(0) to CF(1) or is implicated in proton conduction. This is ATP synthase subunit delta from Cereibacter sphaeroides (strain ATCC 17029 / ATH 2.4.9) (Rhodobacter sphaeroides).